The sequence spans 103 residues: Glutaredoxin-C1 (103 aa).

The 102-residue stretch at 1 to 102 (MDRVNRLAAQ…PLLRNAGALW (102 aa)) folds into the Glutaredoxin domain. A disulfide bond links Cys21 and Cys24.

The protein belongs to the glutaredoxin family. CC-type subfamily.

It is found in the cytoplasm. Functionally, has a glutathione-disulfide oxidoreductase activity in the presence of NADPH and glutathione reductase. Reduces low molecular weight disulfides and proteins. This is Glutaredoxin-C1 (GRXC1) from Oryza sativa subsp. japonica (Rice).